Reading from the N-terminus, the 630-residue chain is Pentatricopeptide repeat-containing protein At2g03880, mitochondrial (630 aa).

The N-terminal 76 residues, 1–76, are a transit peptide targeting the mitochondrion; sequence MKSVMSKIKL…LIKCCISNRA (76 aa). PPR repeat units follow at residues 60–94, 95–125, 126–160, 161–192, 193–223, 224–258, 259–289, 292–322, 323–357, 358–388, and 394–424; these read DSAT…GHRP, MMFL…MPQR, NVIS…NVRP, NVYT…GLES, DVFV…MVTG, DAIV…GFIA, EQAT…IVKY, DLIL…MKER, DVIT…GTKP, NYIT…MKKL, and VREH…MECE. Positions 429 to 504 are type E motif; sequence TWRTLLGACR…EPGCSWIEVN (76 aa). The segment at 505 to 535 is type E(+) motif; the sequence is KQIHAFIIGDNSHPQIVEVSKKLNQLIHRLT. A type DYW motif region spans residues 536–630; sequence GIGYVPETNF…DGKCSCGDYW (95 aa).

This sequence belongs to the PPR family. PCMP-H subfamily.

It localises to the mitochondrion. The protein is Pentatricopeptide repeat-containing protein At2g03880, mitochondrial (PCMP-H44) of Arabidopsis thaliana (Mouse-ear cress).